The chain runs to 195 residues: PRELI domain containing protein 3B (195 aa).

Positions 1 to 172 (MKIWTSEHVF…VIHKLNAEIE (172 aa)) constitute a PRELI/MSF1 domain. Serine 46 and serine 51 each carry phosphoserine.

This sequence belongs to the slowmo family.

The sequence is that of PRELI domain containing protein 3B (Prelid3b) from Mus musculus (Mouse).